Reading from the N-terminus, the 81-residue chain is MSTLGMMLLILLLLVPLATFADDGPTMRGHRSAKLLAHTTRDSCPSGTNCPSKICCNGNCCSKSSCRCETNQATKERVCVC.

An N-terminal signal peptide occupies residues 1-21; sequence MSTLGMMLLILLLLVPLATFA. The propeptide occupies 22–31; sequence DDGPTMRGHR.

Belongs to the conotoxin N superfamily. In terms of processing, contains 5 disulfide bonds. Expressed by the venom duct.

Its subcellular location is the secreted. Its function is as follows. Probable neurotoxin. This Conus imperialis (Imperial cone) protein is Conotoxin Im016.